Reading from the N-terminus, the 399-residue chain is Chorismate synthase (399 aa).

The interval Ile-41–Gln-72 is disordered. Arg-48 is a binding site for NADP(+). Residues Arg-125–Ser-127, Gly-288, His-303–Ser-307, and Arg-330 each bind FMN. Composition is skewed to basic and acidic residues over residues Pro-363–Tyr-377 and Ala-389–Asp-399. A disordered region spans residues Pro-363–Asp-399.

This sequence belongs to the chorismate synthase family. FMNH2 is required as a cofactor.

The enzyme catalyses 5-O-(1-carboxyvinyl)-3-phosphoshikimate = chorismate + phosphate. It functions in the pathway metabolic intermediate biosynthesis; chorismate biosynthesis; chorismate from D-erythrose 4-phosphate and phosphoenolpyruvate: step 7/7. Catalyzes the anti-1,4-elimination of the C-3 phosphate and the C-6 proR hydrogen from 5-enolpyruvylshikimate-3-phosphate (EPSP) to yield chorismate, which is the branch point compound that serves as the starting substrate for the three terminal pathways of aromatic amino acid biosynthesis. This reaction introduces a second double bond into the aromatic ring system. In Haloarcula marismortui (strain ATCC 43049 / DSM 3752 / JCM 8966 / VKM B-1809) (Halobacterium marismortui), this protein is Chorismate synthase.